The following is a 147-amino-acid chain: Large ribosomal subunit protein uL15 (147 aa).

Residues 1–28 show a composition bias toward basic residues; it reads MIRRRKKVRKLRGSHTHGWGCKKKHRGG. The disordered stretch occupies residues 1-43; the sequence is MIRRRKKVRKLRGSHTHGWGCKKKHRGGGSKGGRGMAGTGKRN. Over residues 29–38 the composition is skewed to gly residues; sequence GSKGGRGMAG.

The protein belongs to the universal ribosomal protein uL15 family. As to quaternary structure, part of the 50S ribosomal subunit.

Binds to the 23S rRNA. This is Large ribosomal subunit protein uL15 from Pyrococcus horikoshii (strain ATCC 700860 / DSM 12428 / JCM 9974 / NBRC 100139 / OT-3).